Consider the following 156-residue polypeptide: MNLNATLFAQMVVFLVLAWFTMKFVWPPLINALDERSKKIADGLAAAEKGKAELDAAHKRVDQELAQARNDGQQRIADAEKRAQAVAEEIKANAQAEAARIVAQAKAEAEQQIVKARETLRGEVAALAVKGAEQILKREVDQTAHAQLLNQLKAEL.

The helical transmembrane segment at leucine 7 to leucine 29 threads the bilayer.

It belongs to the ATPase B chain family. As to quaternary structure, F-type ATPases have 2 components, F(1) - the catalytic core - and F(0) - the membrane proton channel. F(1) has five subunits: alpha(3), beta(3), gamma(1), delta(1), epsilon(1). F(0) has three main subunits: a(1), b(2) and c(10-14). The alpha and beta chains form an alternating ring which encloses part of the gamma chain. F(1) is attached to F(0) by a central stalk formed by the gamma and epsilon chains, while a peripheral stalk is formed by the delta and b chains.

It localises to the cell inner membrane. Functionally, f(1)F(0) ATP synthase produces ATP from ADP in the presence of a proton or sodium gradient. F-type ATPases consist of two structural domains, F(1) containing the extramembraneous catalytic core and F(0) containing the membrane proton channel, linked together by a central stalk and a peripheral stalk. During catalysis, ATP synthesis in the catalytic domain of F(1) is coupled via a rotary mechanism of the central stalk subunits to proton translocation. Its function is as follows. Component of the F(0) channel, it forms part of the peripheral stalk, linking F(1) to F(0). This Burkholderia vietnamiensis (strain G4 / LMG 22486) (Burkholderia cepacia (strain R1808)) protein is ATP synthase subunit b.